The chain runs to 501 residues: Glycerol kinase (501 aa).

ADP is bound at residue Thr17. The ATP site is built by Thr17, Thr18, and Ser19. Residue Thr17 participates in sn-glycerol 3-phosphate binding. Arg21 lines the ADP pocket. Positions 87, 88, 139, and 243 each coordinate sn-glycerol 3-phosphate. Glycerol is bound by residues Arg87, Glu88, Tyr139, Asp243, and Gln244. Thr265 and Gly308 together coordinate ADP. Residues Thr265, Gly308, Gln312, and Gly409 each contribute to the ATP site. ADP-binding residues include Gly409 and Asn413.

This sequence belongs to the FGGY kinase family.

The enzyme catalyses glycerol + ATP = sn-glycerol 3-phosphate + ADP + H(+). The protein operates within polyol metabolism; glycerol degradation via glycerol kinase pathway; sn-glycerol 3-phosphate from glycerol: step 1/1. Its activity is regulated as follows. Inhibited by fructose 1,6-bisphosphate (FBP). Functionally, key enzyme in the regulation of glycerol uptake and metabolism. Catalyzes the phosphorylation of glycerol to yield sn-glycerol 3-phosphate. In Pseudomonas savastanoi pv. phaseolicola (strain 1448A / Race 6) (Pseudomonas syringae pv. phaseolicola (strain 1448A / Race 6)), this protein is Glycerol kinase.